The chain runs to 544 residues: Serine/threonine-protein kinase PAK 1 (544 aa).

Residues 1 to 79 (MSNNGLDVQD…KERPEISLPS (79 aa)) are disordered. Position 2 is an N-acetylserine (Ser2). Ser21 carries the phosphoserine; by PKB and autocatalysis modification. Position 57 is a phosphoserine; by autocatalysis (Ser57). Over residues 68–79 (KEKERPEISLPS) the composition is skewed to basic and acidic residues. The autoregulatory region stretch occupies residues 70–140 (KERPEISLPS…YNSKKTSNSQ (71 aa)). The CRIB domain occupies 75 to 88 (ISLPSDFEHTIHVG). Positions 75–105 (ISLPSDFEHTIHVGFDAVTGEFTGMPEQWAR) are GTPase-binding. Thr84 is subject to Phosphothreonine; by OXSR1. Ser115 bears the Phosphoserine mark. 2 positions are modified to phosphotyrosine: Tyr131 and Tyr142. Ser144 and Ser149 each carry phosphoserine; by autocatalysis. Residues 150–166 (AEDYNSSNTLNVKTVSE) show a composition bias toward polar residues. The disordered stretch occupies residues 150-195 (AEDYNSSNTLNVKTVSETPAVPPVSEDEDDDDDATPPPVIAPRPEH). At Tyr153 the chain carries Phosphotyrosine; by JAK2. At Ser174 the chain carries Phosphoserine. The span at 174 to 183 (SEDEDDDDDA) shows a compositional bias: acidic residues. Thr184 is subject to Phosphothreonine. At Ser198 the chain carries Phosphoserine; by autocatalysis. Phosphotyrosine; by JAK2 is present on Tyr200. Ser203 carries the phosphoserine; by autocatalysis modification. Residues 209-250 (PVTPTRDVATSPISPTENNTTPPDALTRNTEKQKKKPKMSDE) form a disordered region. 2 positions are modified to phosphothreonine: Thr211 and Thr218. Residues Ser219 and Ser222 each carry the phosphoserine modification. Polar residues predominate over residues 219–230 (SPISPTENNTTP). Thr224, Thr228, and Thr229 each carry phosphothreonine. The Protein kinase domain occupies 269–520 (YTRFEKIGQG…AKELLQHQFL (252 aa)). 275 to 283 (IGQGASGTV) is a binding site for ATP. Phosphotyrosine; by JAK2 is present on Tyr284. ATP is bound at residue Lys298. The Proton acceptor role is filled by Asp388. Thr422 bears the Phosphothreonine; by autocatalysis, BRSK2 and PDPK1 mark.

This sequence belongs to the protein kinase superfamily. STE Ser/Thr protein kinase family. STE20 subfamily. Homodimer in its autoinhibited state. Active as monomer. Interacts with GIT1. Component of cytoplasmic complexes, which also contains PXN, ARHGEF7 and GIT1. Interacts with NISCH. Interacts with DVL1; mediates the formation of a DVL1, MUSK and PAK1 ternary complex involved in AChR clustering. Binds to the caspase-cleaved p110 isoform of CDC2L1 and CDC2L2, p110C, but not the full-length proteins. Interacts with ARHGEF7. Interacts with SCRIB. Interacts with PDPK1. Interacts (via kinase domain) with RAF1. Interacts with NCK1 and NCK2. Interacts with TBCB. Interacts with BRSK2. Interacts tightly with GTP-bound but not GDP-bound CDC42/P21 and RAC1. Interacts with SNAI1. Interacts with CIB1 (via N-terminal region); the interaction is direct, promotes PAK1 activity and occurs in a calcium-dependent manner. Interacts with INPP5K. Interacts with gamma-tubulin. Interacts with RHOU; the interaction promotes PAK1 activation. It depends on Mg(2+) as a cofactor. In terms of processing, autophosphorylated in trans, meaning that in a dimer, one kinase molecule phosphorylates the other one. Activated by autophosphorylation at Thr-422 in response to a conformation change, triggered by interaction with GTP-bound CDC42 or RAC1. Activated by phosphorylation at Thr-422 by PDPK1. Phosphorylated by JAK2 in response to PRL; this increases PAK1 kinase activity. Phosphorylated at Ser-21 by PKB/AKT; this reduces interaction with NCK1 and association with focal adhesion sites. Activated by phosphorylation at Thr-422 by BRSK2. Upon DNA damage, phosphorylated at Thr-211 and translocates to the nucleoplasm. Phosphorylated at tyrosine residues, which can be enhanced by NTN1. As to expression, expressed predominantly in the brain, with higher expression in neuronal groups associated with motor function, and at lower levels in the spleen.

The protein resides in the cytoplasm. The protein localises to the cell junction. Its subcellular location is the focal adhesion. It localises to the cell projection. It is found in the lamellipodium. The protein resides in the cell membrane. The protein localises to the ruffle membrane. Its subcellular location is the invadopodium. It localises to the nucleus. It is found in the nucleoplasm. The protein resides in the chromosome. The protein localises to the cytoskeleton. Its subcellular location is the microtubule organizing center. It localises to the centrosome. It carries out the reaction L-seryl-[protein] + ATP = O-phospho-L-seryl-[protein] + ADP + H(+). The enzyme catalyses L-threonyl-[protein] + ATP = O-phospho-L-threonyl-[protein] + ADP + H(+). With respect to regulation, phosphorylation of Thr-84 by OXSR1 inhibits activation. Activated by binding small G proteins. Binding of GTP-bound CDC42 or RAC1 to the autoregulatory region releases monomers from the autoinhibited dimer, and enables activation by phosphorylation of Thr-422. In terms of biological role, protein kinase involved in intracellular signaling pathways downstream of integrins and receptor-type kinases that plays an important role in cytoskeleton dynamics, in cell adhesion, migration, proliferation, apoptosis, mitosis, and in vesicle-mediated transport processes. Can directly phosphorylate BAD and protects cells against apoptosis. Activated by interaction with CDC42 and RAC1. Functions as a GTPase effector that links the Rho-related GTPases CDC42 and RAC1 to the JNK MAP kinase pathway. Phosphorylates and activates MAP2K1, and thereby mediates activation of downstream MAP kinases. Involved in the reorganization of the actin cytoskeleton, actin stress fibers and of focal adhesion complexes. Phosphorylates the tubulin chaperone TBCB and thereby plays a role in the regulation of microtubule biogenesis and organization of the tubulin cytoskeleton. Plays a role in the regulation of insulin secretion in response to elevated glucose levels. Part of a ternary complex that contains PAK1, DVL1 and MUSK that is important for MUSK-dependent regulation of AChR clustering during the formation of the neuromuscular junction (NMJ). Activity is inhibited in cells undergoing apoptosis, potentially due to binding of CDC2L1 and CDC2L2. Phosphorylates MYL9/MLC2. Phosphorylates RAF1 at 'Ser-338' and 'Ser-339' resulting in: activation of RAF1, stimulation of RAF1 translocation to mitochondria, phosphorylation of BAD by RAF1, and RAF1 binding to BCL2. Phosphorylates SNAI1 at 'Ser-246' promoting its transcriptional repressor activity by increasing its accumulation in the nucleus. In podocytes, promotes NR3C2 nuclear localization. Required for atypical chemokine receptor ACKR2-induced phosphorylation of LIMK1 and cofilin (CFL1) and for the up-regulation of ACKR2 from endosomal compartment to cell membrane, increasing its efficiency in chemokine uptake and degradation. In synapses, seems to mediate the regulation of F-actin cluster formation performed by SHANK3, maybe through CFL1 phosphorylation and inactivation. Plays a role in RUFY3-mediated facilitating gastric cancer cells migration and invasion. In response to DNA damage, phosphorylates MORC2 which activates its ATPase activity and facilitates chromatin remodeling. In neurons, plays a crucial role in regulating GABA(A) receptor synaptic stability and hence GABAergic inhibitory synaptic transmission through its role in F-actin stabilization. In hippocampal neurons, necessary for the formation of dendritic spines and excitatory synapses; this function is dependent on kinase activity and may be exerted by the regulation of actomyosin contractility through the phosphorylation of myosin II regulatory light chain (MLC). Along with GIT1, positively regulates microtubule nucleation during interphase. Phosphorylates FXR1, promoting its localization to stress granules and activity. Phosphorylates ILK on 'Thr-173' and 'Ser-246', promoting nuclear export of ILK. In Rattus norvegicus (Rat), this protein is Serine/threonine-protein kinase PAK 1.